We begin with the raw amino-acid sequence, 751 residues long: Protein CLMP1 (751 aa).

Residues 1–11 show a composition bias toward basic residues; sequence MGKSGGRKKKS. The disordered stretch occupies residues 1-33; the sequence is MGKSGGRKKKSGGSNSNSSQVNSSETSGLSKPS. Low complexity predominate over residues 12–28; it reads GGSNSNSSQVNSSETSG. TPR repeat units lie at residues 51 to 84, 89 to 124, and 125 to 158; these read AHELKEEGNKKFQARDYVGALEQYENGIKLIPKS, AVFHSNRAACLMQMKPIDYESVISECSMALKSQPGF, and TRALLRRARAFEAVGKFDLAVQDVNVLLGSDPNH. In terms of domain architecture, PB1 spans 290 to 382; that stretch reads WRPLKFVYDH…GMLRLHVVDV (93 aa). Residues 386–443 are disordered; the sequence is QEPMLLEEEEEEVEEKPVIEEVISSPTESLSETEINTEKTDKEVEKEKASSSEDPETK. Residues 390 to 399 are compositionally biased toward acidic residues; that stretch reads LLEEEEEEVE. The span at 409–419 shows a compositional bias: polar residues; that stretch reads SSPTESLSETE. The span at 421–443 shows a compositional bias: basic and acidic residues; the sequence is NTEKTDKEVEKEKASSSEDPETK. 3 TPR repeats span residues 434-468, 481-514, and 536-570; these read ASSSEDPETKELEMDDWLFDFAHLFRTHVGIDPDA, SEALEETVTSEKAQPLFDKASAKFQEVAALAFFN, and EVVAAQLQTAYEWVKERYTLAKEKYEQALSIKPDF. Basic and acidic residues predominate over residues 630 to 648; it reads EQRMDDLKNPNSNKKEEVS. The segment at 630 to 663 is disordered; that stretch reads EQRMDDLKNPNSNKKEEVSKRRKKQGGDGNEEVS.

In terms of assembly, interacts with myosin XI-K. Expressed in roots, stems, leaves, apex, flowers and seeds. Detected throughout the petiole in juvenile and young leaves, but restricted to the petiole midvein in older leaves. Expressed in hydathodes, at the base of the trichome, in the vascular cylinder of primary root and lateral root, in emerging lateral root primordia, in pollen and in developing embryos, but not in mature embryos.

The protein localises to the cytoplasm. In terms of biological role, required for plastid separation and partitioning during cell division. Not involved in plastid constriction or in the organization of cytoplasmic actin cables. Contributes to polar growth of root hairs. This chain is Protein CLMP1, found in Arabidopsis thaliana (Mouse-ear cress).